Here is a 522-residue protein sequence, read N- to C-terminus: Lysophospholipid acyltransferase LPCAT4 (522 aa).

A run of 2 helical transmembrane segments spans residues 43–63 (ILGFTLFPLRFLLAAIFLFLM) and 92–112 (HLIYLLSRTMFFMCGFHWITI). The short motif at 130 to 135 (HSTFFD) is the HXXXXD motif element. N-linked (GlcNAc...) asparagine glycans are attached at residues Asn166 and Asn517. The segment at 496 to 522 (GRRKPPHIQQNGGCSGKNNPRNQSKMD) is disordered. Residues 503-522 (IQQNGGCSGKNNPRNQSKMD) are compositionally biased toward polar residues.

This sequence belongs to the 1-acyl-sn-glycerol-3-phosphate acyltransferase family.

It is found in the endoplasmic reticulum membrane. It carries out the reaction a 1-acyl-sn-glycero-3-phosphoethanolamine + an acyl-CoA = a 1,2-diacyl-sn-glycero-3-phosphoethanolamine + CoA. The enzyme catalyses a 1-O-(1Z-alkenyl)-sn-glycero-3-phosphoethanolamine + an acyl-CoA = a 1-O-(1Z-alkenyl)-2-acyl-sn-glycero-3-phosphoethanolamine + CoA. The catalysed reaction is a 1-acyl-sn-glycero-3-phosphocholine + an acyl-CoA = a 1,2-diacyl-sn-glycero-3-phosphocholine + CoA. It catalyses the reaction a 1-O-alkyl-sn-glycero-3-phosphocholine + acetyl-CoA = a 1-O-alkyl-2-acetyl-sn-glycero-3-phosphocholine + CoA. It carries out the reaction a 1-acyl-sn-glycero-3-phospho-L-serine + an acyl-CoA = a 1,2-diacyl-sn-glycero-3-phospho-L-serine + CoA. The protein operates within lipid metabolism; phospholipid metabolism. Functionally, displays acyl-CoA-dependent lysophospholipid acyltransferase activity with a subset of lysophospholipids as substrates. Prefers long chain acyl-CoAs (C16, C18) as acyl donors. This is Lysophospholipid acyltransferase LPCAT4 (lpcat4) from Xenopus tropicalis (Western clawed frog).